The primary structure comprises 227 residues: Transmembrane emp24 domain-containing protein 1 (227 aa).

Residues 1–23 (MMAAGTALGLALWLLLPPVGVGG) form the signal peptide. The Extracellular segment spans residues 24 to 194 (AGPPPIQDGE…LQEGNLERVN (171 aa)). Residues 43 to 125 (KQCFYQSAPA…EKLVFFELIF (83 aa)) form the GOLD domain. Residues 145–170 (EILEVKMEDIKESIETMRIRLERSIQ) adopt a coiled-coil conformation. Residues 195–215 (FWSAVNVAVLLLVAVLQVCTL) traverse the membrane as a helical segment. Topologically, residues 216 to 227 (KRFFQDKRPVPM) are cytoplasmic. The COPII vesicle coat-binding signature appears at 218-219 (FF). Positions 218–227 (FFQDKRPVPM) match the COPI vesicle coat-binding motif.

It belongs to the EMP24/GP25L family. Homodimer in endoplasmic reticulum, endoplasmic reticulum-Golgi intermediate compartment and cis-Golgi network. Interacts with IL1RL1. Interacts with RNF26; this interaction is important to modulate innate immune signaling through the cGAS-STING pathway.

It is found in the cell membrane. The protein resides in the endoplasmic reticulum membrane. Its subcellular location is the golgi apparatus. It localises to the cis-Golgi network membrane. The protein localises to the endoplasmic reticulum-Golgi intermediate compartment membrane. Potential role in vesicular protein trafficking, mainly in the early secretory pathway. May act as a cargo receptor at the lumenal side for incorporation of secretory cargo molecules into transport vesicles and may be involved in vesicle coat formation at the cytoplasmic side. Plays a positive role in IL-33-mediated IL-8 and IL-6 production by interacting with interleukin-33 receptor IL1RL1. Plays also a role in the modulation of innate immune signaling through the cGAS-STING pathway by interacting with RNF26. In Bos taurus (Bovine), this protein is Transmembrane emp24 domain-containing protein 1 (TMED1).